Reading from the N-terminus, the 495-residue chain is Cytochrome P450 2E1 (495 aa).

298–303 (FAGTET) serves as a coordination point for substrate. Cysteine 437 contacts heme.

Belongs to the cytochrome P450 family. Interacts with chaperones HSP70 and HSP90; this interaction is required for initial targeting to mitochondria. The cofactor is heme.

It localises to the endoplasmic reticulum membrane. The protein localises to the microsome membrane. It is found in the mitochondrion inner membrane. The catalysed reaction is an organic molecule + reduced [NADPH--hemoprotein reductase] + O2 = an alcohol + oxidized [NADPH--hemoprotein reductase] + H2O + H(+). The enzyme catalyses (5Z,8Z,11Z)-eicosatrienoate + reduced [NADPH--hemoprotein reductase] + O2 = 19-hydroxy-(5Z,8Z,11Z)-eicosatrienoate + oxidized [NADPH--hemoprotein reductase] + H2O + H(+). It catalyses the reaction (5Z,8Z,11Z,14Z,17Z)-eicosapentaenoate + reduced [NADPH--hemoprotein reductase] + O2 = 19-hydroxy-(5Z,8Z,11Z,14Z,17Z)-eicosapentaenoate + oxidized [NADPH--hemoprotein reductase] + H2O + H(+). It carries out the reaction (4Z,7Z,10Z,13Z,16Z,19Z)-docosahexaenoate + reduced [NADPH--hemoprotein reductase] + O2 = 21-hydroxy-(4Z,7Z,10Z,13Z,16Z,19Z)-docosahexaenoate + oxidized [NADPH--hemoprotein reductase] + H2O + H(+). The catalysed reaction is dodecanoate + reduced [NADPH--hemoprotein reductase] + O2 = 11-hydroxydodecanoate + oxidized [NADPH--hemoprotein reductase] + H2O + H(+). The enzyme catalyses tetradecanoate + reduced [NADPH--hemoprotein reductase] + O2 = 13-hydroxytetradecanoate + oxidized [NADPH--hemoprotein reductase] + H2O + H(+). It catalyses the reaction 4-nitrophenol + NADPH + O2 + H(+) = 4-nitrocatechol + NADP(+) + H2O. It functions in the pathway lipid metabolism; fatty acid metabolism. The omega-1 hydroxylase activity is stimulated by cytochrome b5. A cytochrome P450 monooxygenase involved in the metabolism of fatty acids. Mechanistically, uses molecular oxygen inserting one oxygen atom into a substrate, and reducing the second into a water molecule, with two electrons provided by NADPH via cytochrome P450 reductase (NADPH--hemoprotein reductase). Catalyzes the hydroxylation of carbon-hydrogen bonds. Hydroxylates fatty acids specifically at the omega-1 position displaying the highest catalytic activity for saturated fatty acids. May be involved in the oxidative metabolism of xenobiotics. This is Cytochrome P450 2E1 (CYP2E1) from Sus scrofa (Pig).